The following is a 408-amino-acid chain: G2/mitotic-specific cyclin-B (408 aa).

This sequence belongs to the cyclin family. Cyclin AB subfamily. In terms of assembly, interacts with the CDC2 protein kinase to form a serine/threonine kinase holoenzyme complex also known as maturation promoting factor (MPF). The cyclin subunit imparts substrate specificity to the complex.

In terms of biological role, essential for the control of the cell cycle at the G2/M (mitosis) transition. The sequence is that of G2/mitotic-specific cyclin-B from Patella vulgata (Common limpet).